We begin with the raw amino-acid sequence, 130 residues long: Small ribosomal subunit protein uS9 (130 aa).

It belongs to the universal ribosomal protein uS9 family.

The protein is Small ribosomal subunit protein uS9 of Xanthomonas oryzae pv. oryzae (strain MAFF 311018).